Consider the following 875-residue polypeptide: Metal transporter CNNM2 (875 aa).

The Extracellular portion of the chain corresponds to 1-250 (MIGCGACEPE…TKMIVGEEKK (250 aa)). N112 carries N-linked (GlcNAc...) asparagine glycosylation. The disordered stretch occupies residues 121–149 (TEHERRRHTPSERGLGGPAPPEPDSGPQR). Residues 251-271 (FLLPFWLQVIFISLLLCLSGM) form a helical membrane-spanning segment. One can recognise a CNNM transmembrane domain in the interval 251–431 (FLLPFWLQVI…DPYNDLVKEE (181 aa)). Residues 272-313 (FSGLNLGLMALDPMELRIVQNCGTEKEKNYAKRIEPVRRQGN) lie on the Cytoplasmic side of the membrane. Residues 314–334 (YLLCSLLLGNVLVNTTLTILL) constitute an intramembrane region (helical). Over 335–338 (DDIA) the chain is Cytoplasmic. A helical transmembrane segment spans residues 339–359 (GSGLVAVVVSTIGIVIFGEIV). The Extracellular portion of the chain corresponds to 360–368 (PQAICSRHG). A helical transmembrane segment spans residues 369–389 (LAVGANTIFLTKFFMMMTFPA). Topologically, residues 390–875 (SYPVSKLLDC…NHSLHSEGAI (486 aa)) are cytoplasmic. CBS domains are found at residues 450 to 511 (MTPL…CTPL) and 518 to 584 (YNHP…ILDE). Residues 741–763 (AGSPGENKSPPRPCGLNHSDSLS) are disordered. The residue at position 761 (S761) is a Phosphoserine.

It belongs to the ACDP family. Isoform 1 and isoform 2 may interact with each other. The N-terminus is cleaved within the endoplasmic reticulum. The signal peptidase complex seems to be involved in the processing, but the exact cleavage site has not been identified. Widely expressed, with highest levels in kidney, lung, spleen and testis. In the kidney, predominantly expressed in the distal convoluted tubule and, at lower levels, in the connecting tubule (at protein level).

The protein resides in the cell membrane. Divalent metal cation transporter. Mediates transport of divalent metal cations in an order of Mg(2+) &gt; Co(2+) &gt; Mn(2+) &gt; Sr(2+) &gt; Ba(2+) &gt; Cu(2+) &gt; Fe(2+). This chain is Metal transporter CNNM2 (Cnnm2), found in Mus musculus (Mouse).